Consider the following 314-residue polypeptide: tRNA pseudouridine synthase B (314 aa).

H43 contributes to the substrate binding site. The active-site Nucleophile is D48. 3 residues coordinate substrate: Y76, Y179, and L200.

Belongs to the pseudouridine synthase TruB family. Type 1 subfamily.

It carries out the reaction uridine(55) in tRNA = pseudouridine(55) in tRNA. In terms of biological role, responsible for synthesis of pseudouridine from uracil-55 in the psi GC loop of transfer RNAs. This chain is tRNA pseudouridine synthase B, found in Salmonella paratyphi B (strain ATCC BAA-1250 / SPB7).